Consider the following 629-residue polypeptide: Phosphatidylinositol-3,5-bisphosphate 3-phosphatase MTMR8 (629 aa).

Residues 126 to 500 enclose the Myotubularin phosphatase domain; that stretch reads GWKLIDLKVD…FSFQFWCGMY (375 aa). The a 1,2-diacyl-sn-glycero-3-phospho-(1D-myo-inositol-3,5-bisphosphate) site is built by Asn-250, Asn-275, and Ile-276. 3 residues coordinate a 1,2-diacyl-sn-glycero-3-phospho-(1D-myo-inositol-3-phosphate): Asn-250, Asn-275, and Ile-276. Residue Cys-338 is the Phosphocysteine intermediate of the active site. A 1,2-diacyl-sn-glycero-3-phospho-(1D-myo-inositol-3,5-bisphosphate) is bound by residues Ser-339, Asp-340, Gly-341, Trp-342, Asp-343, Arg-344, Lys-380, and Arg-384. 6 residues coordinate a 1,2-diacyl-sn-glycero-3-phospho-(1D-myo-inositol-3-phosphate): Ser-339, Asp-340, Gly-341, Trp-342, Asp-343, and Arg-344. Phosphate-binding residues include Ser-339 and Asp-340. Trp-342, Asp-343, and Arg-344 together coordinate phosphate. Arg-384 provides a ligand contact to a 1,2-diacyl-sn-glycero-3-phospho-(1D-myo-inositol-3-phosphate). A coiled-coil region spans residues 517–543; that stretch reads LLSCMNQKIKLEDNASELENKLPFLDG.

It belongs to the protein-tyrosine phosphatase family. Non-receptor class myotubularin subfamily. As to quaternary structure, homodimer.

The protein resides in the nucleus envelope. It carries out the reaction a 1,2-diacyl-sn-glycero-3-phospho-(1D-myo-inositol-3,5-bisphosphate) + H2O = a 1,2-diacyl-sn-glycero-3-phospho-(1D-myo-inositol-5-phosphate) + phosphate. It catalyses the reaction a 1,2-diacyl-sn-glycero-3-phospho-(1D-myo-inositol-3-phosphate) + H2O = a 1,2-diacyl-sn-glycero-3-phospho-(1D-myo-inositol) + phosphate. The enzyme catalyses 1,2-dioctanoyl-sn-glycero-3-phospho-(1D-myo-inositol-3,5-bisphosphate) + H2O = 1,2-dioctanoyl-sn-glycero-3-phospho-(1D-myo-inositol-5-phosphate) + phosphate. Its function is as follows. Lipid phosphatase that specifically dephosphorylates the D-3 position of phosphatidylinositol 3-phosphate and phosphatidylinositol 3,5-bisphosphate, generating phosphatidylinositol and phosphatidylinositol 5-phosphate. The protein is Phosphatidylinositol-3,5-bisphosphate 3-phosphatase MTMR8 of Gallus gallus (Chicken).